Here is a 390-residue protein sequence, read N- to C-terminus: NADH-quinone oxidoreductase subunit D (390 aa).

The protein belongs to the complex I 49 kDa subunit family. In terms of assembly, NDH-1 is composed of 14 different subunits. Subunits NuoB, C, D, E, F, and G constitute the peripheral sector of the complex.

The protein localises to the cell inner membrane. It carries out the reaction a quinone + NADH + 5 H(+)(in) = a quinol + NAD(+) + 4 H(+)(out). In terms of biological role, NDH-1 shuttles electrons from NADH, via FMN and iron-sulfur (Fe-S) centers, to quinones in the respiratory chain. The immediate electron acceptor for the enzyme in this species is believed to be ubiquinone. Couples the redox reaction to proton translocation (for every two electrons transferred, four hydrogen ions are translocated across the cytoplasmic membrane), and thus conserves the redox energy in a proton gradient. The chain is NADH-quinone oxidoreductase subunit D from Geobacter metallireducens (strain ATCC 53774 / DSM 7210 / GS-15).